Reading from the N-terminus, the 303-residue chain is Protein transport protein SEC13-2 (303 aa).

6 WD repeats span residues 7–46, 53–95, 102–143, 149–202, 209–251, and 261–300; these read AHEGVIHHAALNYYGTRLATCSSDKTVKIFEINDVNNSSS, GHEG…GKMQ, VHSA…IAST, AHKF…ETYV, GHKD…KKND, and KFEQKLGSVSWSLSGNLLAVSDDDKNVTIWKESGDGKWEE.

The protein belongs to the WD repeat SEC13 family. In terms of assembly, the COPII coat is composed of at least 5 proteins: the SEC23/24 complex, the SEC13/31 complex, and the protein SAR1. Component of the nuclear pore complex (NPC). NPC constitutes the exclusive means of nucleocytoplasmic transport. NPCs allow the passive diffusion of ions and small molecules and the active, nuclear transport receptor-mediated bidirectional transport of macromolecules such as proteins, RNAs, ribonucleoparticles (RNPs), and ribosomal subunits across the nuclear envelope. Due to its 8-fold rotational symmetry, all subunits are present with 8 copies or multiples thereof.

It is found in the cytoplasmic vesicle. The protein localises to the COPII-coated vesicle membrane. The protein resides in the endoplasmic reticulum membrane. Its subcellular location is the nucleus. It localises to the nuclear pore complex. Its function is as follows. Component of the coat protein complex II (COPII) which promotes the formation of transport vesicles from the endoplasmic reticulum (ER). The coat has two main functions, the physical deformation of the endoplasmic reticulum membrane into vesicles and the selection of cargo molecules. It also functions as a component of the nuclear pore complex (NPC). NPC components, collectively referred to as nucleoporins (NUPs), can play the role of both NPC structural components and of docking or interaction partners for transiently associated nuclear transport factors. SEC13 is required for efficient mRNA export from the nucleus to the cytoplasm and for correct nuclear pore biogenesis and distribution. In Candida glabrata (strain ATCC 2001 / BCRC 20586 / JCM 3761 / NBRC 0622 / NRRL Y-65 / CBS 138) (Yeast), this protein is Protein transport protein SEC13-2 (SEC132).